The following is a 197-amino-acid chain: Double homeobox protein 5 (197 aa).

2 DNA-binding regions (homeobox) span residues 46-105 (GRRM…LRQH) and 121-180 (GRRK…RGQS). The tract at residues 101 to 127 (QLRQHRRQSRPWPGRRDPQKGRRKRTA) is disordered.

Belongs to the paired homeobox family. As to expression, expressed in hepatoma Hep3B cells.

Its subcellular location is the nucleus. This chain is Double homeobox protein 5 (DUX5), found in Homo sapiens (Human).